The chain runs to 191 residues: Probable calcium-binding protein CML8 (191 aa).

The segment at 1 to 41 is disordered; the sequence is MASKYRGYYHDEASSAAGGGGGGGGGDGYRREKQVRKKRLT. The segment covering 17–27 has biased composition (gly residues); it reads AGGGGGGGGGD. 4 consecutive EF-hand domains span residues 43 to 78, 79 to 114, 116 to 151, and 152 to 187; these read QKRK…LGFE, MTPE…KMGE, DARE…TGEP, and FTLD…IGFG. The Ca(2+) site is built by Asp-56, Asp-58, Ser-60, Thr-62, Glu-67, Asp-92, Asp-94, Ser-96, Thr-98, Glu-103, Asp-129, Asp-131, Asn-133, Lys-135, Asp-140, Asp-165, Asn-167, Asp-169, Glu-171, and Glu-176.

Potential calcium sensor. In Oryza sativa subsp. japonica (Rice), this protein is Probable calcium-binding protein CML8 (CML8).